Consider the following 597-residue polypeptide: Sodium/mannose cotransporter SLC5A10 (597 aa).

Residues 1–16 (MVADNSTSDPHAPGPQ) lie on the Extracellular side of the membrane. Asn5 is a glycosylation site (N-linked (GlcNAc...) asparagine). A helical transmembrane segment spans residues 17–37 (LSVTDIVVITVYFALNVAVGI). Over 38 to 73 (WSSCRASRNTVSGYFLAGRDMTWWPIGASLFGSSEG) the chain is Cytoplasmic. Phosphoserine is present on Ser49. The helical transmembrane segment at 74-94 (SGLFIGLAGSGAAGGLAVAGF) threads the bilayer. Over 95-100 (DWNATY) the chain is Extracellular. The helical transmembrane segment at 101 to 121 (VLLALAWVFGAIYISSEIVTL) threads the bilayer. Topologically, residues 122–137 (AEYIQKRFGGQRIRMY) are cytoplasmic. Residues 138 to 158 (LSVLSLLLSVFTKISLDLYAG) traverse the membrane as a helical segment. The Extracellular segment spans residues 159–171 (ALFVHICLGWNFY). The chain crosses the membrane as a helical span at residues 172–194 (LSTILTLTITALYTITGGLVAVI). The Cytoplasmic portion of the chain corresponds to 195 to 200 (YTDALQ). The helical transmembrane segment at 201-219 (TLIMVVGAVILAIKAFHQI) threads the bilayer. Topologically, residues 220 to 265 (DGYGQMEAAYARAIPSRTVANTTCHLPRADAMHMFRDPYTGDLPWT) are extracellular. The helical transmembrane segment at 266 to 286 (GMTFGLTIMATWYWCTDQVIV) threads the bilayer. Topologically, residues 287–301 (QRSLSARNLNHAKAG) are cytoplasmic. The chain crosses the membrane as a helical span at residues 302–322 (SILASYLKMLPMGLMIMPGMI). Over 323-367 (SRALFPDEVGCVVPSECLRACGAEIGCSNIAYPKLVMELMPVGLR) the chain is Extracellular. Residues 368–390 (GLMIAVMMPALMSSLSSIFNSSS) form a helical membrane-spanning segment. The Cytoplasmic portion of the chain corresponds to 391-410 (TLFTMDIWRRLRPCASEREL). Residues 411–431 (LLVGRLVIVVLIGVSVAWIPV) traverse the membrane as a helical segment. The Extracellular segment spans residues 432 to 444 (LQGSNGGQLFIYM). The chain crosses the membrane as a helical span at residues 445–465 (QSVTSSLAPPVTAVFTLGIFW). Topologically, residues 466-472 (QRANEQG) are cytoplasmic. The chain crosses the membrane as a helical span at residues 473-493 (AFWGLLAGLAVGATRLVLEFL). Residues 494 to 514 (HPAPPCGAADTRPAVLSQLHY) are Extracellular-facing. Residues 515-535 (LHFAVALFVLTGAVAVGGSLL) form a helical membrane-spanning segment. At 536–576 (TPPPRRHQIENLTWWTLTRDLSLGAKAGDGQTPQRYTFWAR) the chain is on the cytoplasmic side. Residues 577–597 (VCGFNAILLMCVNIFFYAYFA) form a helical membrane-spanning segment.

This sequence belongs to the sodium:solute symporter (SSF) (TC 2.A.21) family. As to expression, expressed only in kidney.

It is found in the apical cell membrane. It catalyses the reaction D-mannose(out) + Na(+)(out) = D-mannose(in) + Na(+)(in). The catalysed reaction is D-fructopyranose(out) + Na(+)(out) = D-fructopyranose(in) + Na(+)(in). Its function is as follows. Electrogenic Na+-coupled sugar symporter that actively transports D-mannose or D-fructose at the plasma membrane, with a Na+ to sugar coupling ratio of 1:1. Transporter activity is driven by a transmembrane Na+ electrochemical gradient set by the Na+/K+ pump. Exclusively recognizes sugar substrates having a pyranose ring with an axial hydroxyl group on carbon 2. Has likely evolved to enable renal reabsorption of D-mannose, an important constituent of oligosaccharide chains of glycoproteins. Contributes to dietary D-fructose reabsorption from glomerular filtrate across the brush border of the kidney. The sequence is that of Sodium/mannose cotransporter SLC5A10 (SLC5A10) from Oryctolagus cuniculus (Rabbit).